Reading from the N-terminus, the 340-residue chain is Phenylalanine--tRNA ligase alpha subunit (340 aa).

Residue Glu255 participates in Mg(2+) binding.

It belongs to the class-II aminoacyl-tRNA synthetase family. Phe-tRNA synthetase alpha subunit type 1 subfamily. Tetramer of two alpha and two beta subunits. Mg(2+) is required as a cofactor.

It localises to the cytoplasm. The enzyme catalyses tRNA(Phe) + L-phenylalanine + ATP = L-phenylalanyl-tRNA(Phe) + AMP + diphosphate + H(+). This chain is Phenylalanine--tRNA ligase alpha subunit, found in Desulfitobacterium hafniense (strain DSM 10664 / DCB-2).